Reading from the N-terminus, the 285-residue chain is Probable endonuclease 4 (285 aa).

Zn(2+) contacts are provided by His69, His109, Glu145, Asp179, His182, His216, Asp229, His231, and Glu261.

This sequence belongs to the AP endonuclease 2 family. It depends on Zn(2+) as a cofactor.

The enzyme catalyses Endonucleolytic cleavage to 5'-phosphooligonucleotide end-products.. Functionally, endonuclease IV plays a role in DNA repair. It cleaves phosphodiester bonds at apurinic or apyrimidinic (AP) sites, generating a 3'-hydroxyl group and a 5'-terminal sugar phosphate. The protein is Probable endonuclease 4 of Escherichia coli O1:K1 / APEC.